A 598-amino-acid chain; its full sequence is Urease subunit alpha (598 aa).

Ni(2+) contacts are provided by histidine 141, histidine 143, and lysine 223. Lysine 223 is modified (N6-carboxylysine). Residue histidine 225 participates in substrate binding. Residues histidine 252 and histidine 278 each contribute to the Ni(2+) site. Histidine 326 acts as the Proton donor in catalysis. Aspartate 366 contacts Ni(2+).

The protein belongs to the metallo-dependent hydrolases superfamily. Urease alpha subunit family. Heterotrimer of UreA (gamma), UreB (beta) and UreC (alpha) subunits. Three heterotrimers associate to form the active enzyme. The cofactor is Ni cation. Post-translationally, carboxylation allows a single lysine to coordinate two nickel ions.

The protein localises to the cytoplasm. The enzyme catalyses urea + 2 H2O + H(+) = hydrogencarbonate + 2 NH4(+). It participates in nitrogen metabolism; urea degradation; CO(2) and NH(3) from urea (urease route): step 1/1. In Ureaplasma parvum serovar 3 (strain ATCC 27815 / 27 / NCTC 11736), this protein is Urease subunit alpha.